The following is a 780-amino-acid chain: ATP-dependent 6-phosphofructokinase, muscle type (780 aa).

T2 carries the post-translational modification N-acetylthreonine. The interval 2-390 (THEEHHAAKT…NWEVYKLLAH (389 aa)) is N-terminal catalytic PFK domain 1. ATP contacts are provided by residues G25, 88–89 (RC), and 118–121 (GDGS). Residue D119 coordinates Mg(2+). At S133 the chain carries Phosphoserine. Substrate-binding positions include 164-166 (SID), R201, 208-210 (MGR), E264, R292, and 298-301 (HVQR). D166 acts as the Proton acceptor in catalysis. S377 is subject to Phosphoserine. The tract at residues 391–401 (VRPPVSKGGLH) is interdomain linker. Residues 402 to 780 (TVAVMNVGAP…SRKRSGEAAV (379 aa)) are C-terminal regulatory PFK domain 2. Residues R471 and 528 to 532 (TVSNN) contribute to the beta-D-fructose 2,6-bisphosphate site. S530 is a glycosylation site (O-linked (GlcNAc) serine). The residue at position 557 (K557) is an N6-(2-hydroxyisobutyryl)lysine. Residues R566, 573–575 (MGG), E629, R655, and 661–664 (HMQQ) each bind beta-D-fructose 2,6-bisphosphate. S667 is modified (phosphoserine). Beta-D-fructose 2,6-bisphosphate is bound at residue R735. S775 carries the phosphoserine modification.

Belongs to the phosphofructokinase type A (PFKA) family. ATP-dependent PFK group I subfamily. Eukaryotic two domain clade 'E' sub-subfamily. Homo- and heterotetramers. Phosphofructokinase (PFK) enzyme functions as a tetramer composed of different combinations of 3 types of subunits, called PFKM (M), PFKL (L) and PFKP (P). The composition of the PFK tetramer differs according to the tissue type it is present in. The kinetic and regulatory properties of the tetrameric enzyme are dependent on the subunit composition, hence can vary across tissues. Isoform 2 and isoform 3 interact (via N-terminal testis-specific region) with GSTM5. Isoform 2 and isoform 3 interact (via C-terminus) with HK1 (via N-terminal spermatogenic cell-specific region). Mg(2+) serves as cofactor. GlcNAcylation decreases enzyme activity. Isoform 1 is expressed in skeletal muscle (at protein level). Isoform 2 and isoform 3 are testis-specific and are detected in quiescent sperm (at protein level). They are first detected in the cytoplasm of round spermatids and subsequently in the flagellum of elongated spermatids extending into the seminiferous tubule lumen (at protein level). Isoform 2 is expressed at higher level than isoform 3 in testis.

It is found in the cytoplasm. It localises to the cell projection. Its subcellular location is the cilium. The protein localises to the flagellum. The catalysed reaction is beta-D-fructose 6-phosphate + ATP = beta-D-fructose 1,6-bisphosphate + ADP + H(+). The protein operates within carbohydrate degradation; glycolysis; D-glyceraldehyde 3-phosphate and glycerone phosphate from D-glucose: step 3/4. Allosterically activated by ADP, AMP, or fructose 2,6-bisphosphate, and allosterically inhibited by ATP or citrate. Functionally, catalyzes the phosphorylation of D-fructose 6-phosphate to fructose 1,6-bisphosphate by ATP, the first committing step of glycolysis. This is ATP-dependent 6-phosphofructokinase, muscle type (Pfkm) from Mus musculus (Mouse).